The chain runs to 157 residues: Transcription elongation factor GreA (157 aa).

A coiled-coil region spans residues 1-75 (MSKEIILTQE…VETLINRAKV (75 aa)).

It belongs to the GreA/GreB family.

In terms of biological role, necessary for efficient RNA polymerase transcription elongation past template-encoded arresting sites. The arresting sites in DNA have the property of trapping a certain fraction of elongating RNA polymerases that pass through, resulting in locked ternary complexes. Cleavage of the nascent transcript by cleavage factors such as GreA or GreB allows the resumption of elongation from the new 3'terminus. GreA releases sequences of 2 to 3 nucleotides. The sequence is that of Transcription elongation factor GreA from Mycoplasma capricolum subsp. capricolum (strain California kid / ATCC 27343 / NCTC 10154).